The sequence spans 153 residues: MKFCKPKPKSILSLDIGTKRIGLAYCDPLCITSNILPAVKRFENNQEIKIIRNYINEFNLTGFIVGIPLDEKGKMTTQAIDCKNYGQLLSNELKLPFSYVNEHSSTWESSERFGIKKDKSGLIDSFSAKIILEQWIEEGPELEEIAGKRQIKY.

Belongs to the YqgF nuclease family.

It is found in the cytoplasm. In terms of biological role, could be a nuclease involved in processing of the 5'-end of pre-16S rRNA. This chain is Putative pre-16S rRNA nuclease, found in Prochlorococcus marinus (strain AS9601).